The following is a 235-amino-acid chain: Ribonuclease PH (235 aa).

Residues arginine 86 and 124 to 126 (GTR) contribute to the phosphate site.

The protein belongs to the RNase PH family. In terms of assembly, homohexameric ring arranged as a trimer of dimers.

It catalyses the reaction tRNA(n+1) + phosphate = tRNA(n) + a ribonucleoside 5'-diphosphate. Phosphorolytic 3'-5' exoribonuclease that plays an important role in tRNA 3'-end maturation. Removes nucleotide residues following the 3'-CCA terminus of tRNAs; can also add nucleotides to the ends of RNA molecules by using nucleoside diphosphates as substrates, but this may not be physiologically important. Probably plays a role in initiation of 16S rRNA degradation (leading to ribosome degradation) during starvation. The polypeptide is Ribonuclease PH (Francisella tularensis subsp. mediasiatica (strain FSC147)).